A 189-amino-acid chain; its full sequence is Probable nicotinate-nucleotide adenylyltransferase (189 aa).

The protein belongs to the NadD family.

It catalyses the reaction nicotinate beta-D-ribonucleotide + ATP + H(+) = deamido-NAD(+) + diphosphate. Its pathway is cofactor biosynthesis; NAD(+) biosynthesis; deamido-NAD(+) from nicotinate D-ribonucleotide: step 1/1. In terms of biological role, catalyzes the reversible adenylation of nicotinate mononucleotide (NaMN) to nicotinic acid adenine dinucleotide (NaAD). This chain is Probable nicotinate-nucleotide adenylyltransferase, found in Bacillus pumilus (strain SAFR-032).